A 124-amino-acid polypeptide reads, in one-letter code: Large ribosomal subunit protein bL12c (124 aa).

The protein belongs to the bacterial ribosomal protein bL12 family. As to quaternary structure, homodimer. Part of the ribosomal stalk of the 50S ribosomal subunit. Forms a multimeric L10(L12)X complex, where L10 forms an elongated spine to which 2 to 4 L12 dimers bind in a sequential fashion. Binds GTP-bound translation factors.

It is found in the plastid. The protein localises to the chloroplast. Forms part of the ribosomal stalk which helps the ribosome interact with GTP-bound translation factors. Is thus essential for accurate translation. This is Large ribosomal subunit protein bL12c from Cyanidioschyzon merolae (strain NIES-3377 / 10D) (Unicellular red alga).